We begin with the raw amino-acid sequence, 885 residues long: Dipeptidyl peptidase 9 (885 aa).

Catalysis depends on charge relay system residues Ser752, Asp830, and His862. Residue Ser752 coordinates Val-boroPro.

This sequence belongs to the peptidase S9B family. DPPIV subfamily. In terms of assembly, homodimer. Forms a ternary complex with NLRP1, composed of a DPP9 homodimer, one full-length NLRP1 protein, and one cleaved C-terminus of NLRP1 (NACHT, LRR and PYD domains-containing protein 1, C-terminus).

It localises to the nucleus. It carries out the reaction Release of an N-terminal dipeptide, Xaa-Yaa-|-Zaa-, from a polypeptide, preferentially when Yaa is Pro, provided Zaa is neither Pro nor hydroxyproline.. Its function is as follows. Dipeptidyl peptidase that cleaves off N-terminal dipeptides from proteins having a Pro or Ala residue at position 2. Acts as a key inhibitor of the NLRP1 inflammasome. The protein is Dipeptidyl peptidase 9 of Danio rerio (Zebrafish).